A 248-amino-acid polypeptide reads, in one-letter code: Large ribosomal subunit protein uL29m (248 aa).

2 disordered regions span residues 77-107 (VSKY…GFFG) and 223-248 (AYEP…PPSS).

It belongs to the universal ribosomal protein uL29 family. As to quaternary structure, component of the mitochondrial large ribosomal subunit. Mature mitochondrial ribosomes consist of a small (37S) and a large (54S) subunit. The 37S subunit contains at least 33 different proteins and 1 molecule of RNA (15S). The 54S subunit contains at least 45 different proteins and 1 molecule of RNA (21S).

It is found in the mitochondrion. The polypeptide is Large ribosomal subunit protein uL29m (MRPL4) (Ajellomyces capsulatus (strain NAm1 / WU24) (Darling's disease fungus)).